Reading from the N-terminus, the 1609-residue chain is Transmembrane protein 131-like (1609 aa).

The first 40 residues, M1–G40, serve as a signal peptide directing secretion. The Extracellular segment spans residues Q41 to S869. 6 N-linked (GlcNAc...) asparagine glycosylation sites follow: N343, N439, N522, N593, N709, and N846. The interval D696–N916 is required for Wnt-signaling inhibition and LRP6 degradation. Residues F870–F890 form a helical membrane-spanning segment. Over Q891–V1609 the chain is Cytoplasmic. Disordered regions lie at residues R946–S974, T991–P1014, K1108–V1144, V1159–F1178, and S1304–D1340. Over residues P952 to Q961 the composition is skewed to polar residues. Over residues T991–T1000 the composition is skewed to low complexity. S1122 carries the post-translational modification Phosphoserine. A compositionally biased stretch (low complexity) spans S1304–S1331.

Belongs to the TMEM131 family. In terms of tissue distribution, expressed in thymocytes.

Its subcellular location is the cell membrane. It localises to the cytoplasm. It is found in the endoplasmic reticulum. Its function is as follows. Membrane-associated form that antagonizes canonical Wnt signaling by triggering lysosome-dependent degradation of Wnt-activated LRP6. Regulates thymocyte proliferation. The protein is Transmembrane protein 131-like of Homo sapiens (Human).